The primary structure comprises 183 residues: uncharacterized protein (183 aa).

In terms of domain architecture, Macro spans 1–182; it reads MIKVVKGDIT…KALKIVGQGG (182 aa).

This is an uncharacterized protein from Pyrococcus furiosus (strain ATCC 43587 / DSM 3638 / JCM 8422 / Vc1).